The following is a 219-amino-acid chain: uncharacterized protein (219 aa).

The chain crosses the membrane as a helical span at residues 13–32 (VFGLFLFSLIFFGLLSLATF).

Its subcellular location is the membrane. This is an uncharacterized protein from Aquifex aeolicus (strain VF5).